The sequence spans 55 residues: Myrmicitoxin(1)-Pr6b (55 aa).

The N-terminal stretch at 1-22 is a signal peptide; the sequence is MKIIYAFLLIAVVAFMGSGIMA. The propeptide occupies 23–29; that stretch reads ESLAEAI.

The protein belongs to the formicidae venom clade 4 family. In terms of tissue distribution, expressed by the venom gland.

Its subcellular location is the secreted. Probable neurotoxin. In Pogonomyrmex rugosus (Desert harvester ant), this protein is Myrmicitoxin(1)-Pr6b.